The sequence spans 465 residues: Phenylalanine--tRNA ligase alpha subunit (465 aa).

Threonine 311 and phenylalanine 389 together coordinate L-phenylalanine. Glutamate 391 is a binding site for Mg(2+).

It belongs to the class-II aminoacyl-tRNA synthetase family. Phe-tRNA synthetase alpha subunit type 2 subfamily. In terms of assembly, tetramer of two alpha and two beta subunits. Mg(2+) is required as a cofactor.

The protein localises to the cytoplasm. It carries out the reaction tRNA(Phe) + L-phenylalanine + ATP = L-phenylalanyl-tRNA(Phe) + AMP + diphosphate + H(+). The chain is Phenylalanine--tRNA ligase alpha subunit from Metallosphaera sedula (strain ATCC 51363 / DSM 5348 / JCM 9185 / NBRC 15509 / TH2).